The sequence spans 320 residues: Aspartate carbamoyltransferase catalytic subunit (320 aa).

2 residues coordinate carbamoyl phosphate: R58 and T59. Position 86 (K86) interacts with L-aspartate. Residues R108, H136, and Q139 each contribute to the carbamoyl phosphate site. Positions 169 and 223 each coordinate L-aspartate. Carbamoyl phosphate contacts are provided by G264 and P265.

Belongs to the aspartate/ornithine carbamoyltransferase superfamily. ATCase family. Heterododecamer (2C3:3R2) of six catalytic PyrB chains organized as two trimers (C3), and six regulatory PyrI chains organized as three dimers (R2).

It carries out the reaction carbamoyl phosphate + L-aspartate = N-carbamoyl-L-aspartate + phosphate + H(+). The protein operates within pyrimidine metabolism; UMP biosynthesis via de novo pathway; (S)-dihydroorotate from bicarbonate: step 2/3. Functionally, catalyzes the condensation of carbamoyl phosphate and aspartate to form carbamoyl aspartate and inorganic phosphate, the committed step in the de novo pyrimidine nucleotide biosynthesis pathway. This is Aspartate carbamoyltransferase catalytic subunit from Cereibacter sphaeroides (strain ATCC 17025 / ATH 2.4.3) (Rhodobacter sphaeroides).